A 226-amino-acid polypeptide reads, in one-letter code: Urease accessory protein UreF (226 aa).

This sequence belongs to the UreF family. In terms of assembly, ureD, UreF and UreG form a complex that acts as a GTP-hydrolysis-dependent molecular chaperone, activating the urease apoprotein by helping to assemble the nickel containing metallocenter of UreC. The UreE protein probably delivers the nickel.

It localises to the cytoplasm. Required for maturation of urease via the functional incorporation of the urease nickel metallocenter. The polypeptide is Urease accessory protein UreF (Burkholderia mallei (strain NCTC 10247)).